A 648-amino-acid polypeptide reads, in one-letter code: Chaperone protein DnaK (648 aa).

A Phosphothreonine; by autocatalysis modification is found at T200. The tract at residues 612–631 (QAGAAGAAGAAEGAAQGGAQ) is disordered.

Belongs to the heat shock protein 70 family.

Acts as a chaperone. This Burkholderia multivorans (strain ATCC 17616 / 249) protein is Chaperone protein DnaK.